Here is a 397-residue protein sequence, read N- to C-terminus: Mannonate dehydratase 2 (397 aa).

This sequence belongs to the mannonate dehydratase family. Requires Fe(2+) as cofactor. Mn(2+) serves as cofactor.

The catalysed reaction is D-mannonate = 2-dehydro-3-deoxy-D-gluconate + H2O. It functions in the pathway carbohydrate metabolism; pentose and glucuronate interconversion. Catalyzes the dehydration of D-mannonate. This is Mannonate dehydratase 2 (uxuA2) from Agrobacterium fabrum (strain C58 / ATCC 33970) (Agrobacterium tumefaciens (strain C58)).